The primary structure comprises 371 residues: Ferredoxin--NADP reductase, apicoplast (371 aa).

The transit peptide at 1 to 18 (MKIRFVFILSVLISGVCC) directs the protein to the apicoplast. FAD contacts are provided by residues K68, 155–159 (ARLYS), 172–179 (AIKIHKYE), 192–194 (YCS), and T235. The region spanning 68 to 218 (KNPLKCKIVD…TGAHGYFNLP (151 aa)) is the FAD-binding FR-type domain. K174 lines the NADP(+) pocket. NADP(+) is bound by residues 272-273 (VY), S302, 313-315 (YVQ), and 341-343 (HKS). FAD is bound by residues K342 and Y371.

It belongs to the ferredoxin--NADP reductase type 1 family. Monomer. Homodimer; disulfide linked. NADP binding accelerates formation of an inactive, disulfide-linked homodimer when the protein is exposed to air for 24 hours or more (in vitro); the physiological relevance of this is uncertain. It depends on FAD as a cofactor.

It is found in the plastid. It localises to the apicoplast. It catalyses the reaction 2 reduced [2Fe-2S]-[ferredoxin] + NADP(+) + H(+) = 2 oxidized [2Fe-2S]-[ferredoxin] + NADPH. May play a role in the terminal step of the DOXP/MEP pathway for isoprenoid precursor biosynthesis. The polypeptide is Ferredoxin--NADP reductase, apicoplast (Plasmodium falciparum (isolate 3D7)).